Consider the following 352-residue polypeptide: Peptide chain release factor 1 (352 aa).

At glutamine 233 the chain carries N5-methylglutamine. The segment at asparagine 288 to asparagine 309 is disordered. Basic and acidic residues predominate over residues alanine 289–arginine 306.

It belongs to the prokaryotic/mitochondrial release factor family. In terms of processing, methylated by PrmC. Methylation increases the termination efficiency of RF1.

The protein localises to the cytoplasm. In terms of biological role, peptide chain release factor 1 directs the termination of translation in response to the peptide chain termination codons UAG and UAA. This is Peptide chain release factor 1 from Helicobacter acinonychis (strain Sheeba).